The following is a 259-amino-acid chain: MNKRRVIYEGKAKILYEGPEPGTLIQYFKDDTTAFDATKKAVLDGKGVLNNRISEFIMTHLTSVGVPNHFIRRLNMREQLVRKVDIIPLEVVVRNIAAGSLSTRLGIPEGQSLPRPLVEFYFKNDALHDPMVSEEHIAAFGWATAQEYDDIIALALRVNDFMSGLFAGAGIRLVDFKIEFGRWFENDHDMPRILLADEISPDSCRLWDAKTGEKMDKDRFRRDMGGVTEAYAEVARRLGIIRESGEETDNVIHFTGGSK.

Belongs to the SAICAR synthetase family.

It catalyses the reaction 5-amino-1-(5-phospho-D-ribosyl)imidazole-4-carboxylate + L-aspartate + ATP = (2S)-2-[5-amino-1-(5-phospho-beta-D-ribosyl)imidazole-4-carboxamido]succinate + ADP + phosphate + 2 H(+). It functions in the pathway purine metabolism; IMP biosynthesis via de novo pathway; 5-amino-1-(5-phospho-D-ribosyl)imidazole-4-carboxamide from 5-amino-1-(5-phospho-D-ribosyl)imidazole-4-carboxylate: step 1/2. The protein is Phosphoribosylaminoimidazole-succinocarboxamide synthase of Hyphomonas neptunium (strain ATCC 15444).